Consider the following 257-residue polypeptide: Uracil phosphoribosyltransferase (257 aa).

Residues R77, R102, and 129 to 137 (DPMLATGGS) contribute to the 5-phospho-alpha-D-ribose 1-diphosphate site. Uracil-binding positions include I192 and 197 to 199 (GDA). A 5-phospho-alpha-D-ribose 1-diphosphate-binding site is contributed by D198. A disordered region spans residues 203-257 (QFGPNLFTSSAPSRPEAPAGRGRAAAKTPGRRSARSESPSSTSPSARSRKAAPPA). Composition is skewed to low complexity over residues 211 to 230 (SSAP…AAKT) and 238 to 248 (SESPSSTSPSA).

Belongs to the UPRTase family. Mg(2+) is required as a cofactor.

It carries out the reaction UMP + diphosphate = 5-phospho-alpha-D-ribose 1-diphosphate + uracil. It participates in pyrimidine metabolism; UMP biosynthesis via salvage pathway; UMP from uracil: step 1/1. Its activity is regulated as follows. Allosterically activated by GTP. Its function is as follows. Catalyzes the conversion of uracil and 5-phospho-alpha-D-ribose 1-diphosphate (PRPP) to UMP and diphosphate. This is Uracil phosphoribosyltransferase from Mycolicibacterium paratuberculosis (strain ATCC BAA-968 / K-10) (Mycobacterium paratuberculosis).